Consider the following 1155-residue polypeptide: MIKRVHLGQGRADEILDLPNLIEIQLNSYEKFLQLDKLKSKKPLLNEGLESVFRNIFPIKSGNGDVALEYERYYIENDALNFTEKECKRKGQSYEAVLKVRLNLQFLTTGEIRQKDVYMGTIPLMTERGTFIINGAERVVVSQIHRSPGVVFYKEKDLYSARIIPYRGSWLEFEIDSKKDYLYVKIDRKKRILITLFLRALGFDTREKIIETFYNIKKIKVEDGTKRDLPGQYLAKSINIRENMYYRAGDKITLQDVEDFLQNGVNEIELVDFDGYDDISGKRFVSSNVILNCLEKEDAFFALKDGSKELPKESVMLAVYSSLFPGEPISIDNAENDLKTIFFSERRYDLGRVGRYKLSKKFGFDDLTTSVLTMDDIVNTISHLLRIYEGHDILDDIDHLGNRRVRSVGELLTNIYKGAMSRVEKIAKDRMSNKEVFNLKPQELISVKPIVSAVKEFFATSQLSQFMDQVNPLAELTHKRRLNALGPGGLSRDRAGFEVRDVHYTHYGRMCPIETPEGPNIGLIVSLATYSRVNDYGFLETPYRKVVNGEVTDQLEYLSAIDEEKKCIAQANAAFNSNGKYLEDLVSVRISGDYTTTSPTNIDYMDVSPRQLISVSSALIPFLEHNDANRALMGSNMQRQAVPLLFPKPPIVGTGMESVVAKDSGVVVKAKRSGEVILATSSKIVVKPFEAENAKDLDEYHIVKYERTNQDTCFNQSVLVKEGQKVERGEIIADGPATRYGELALGNNLLLGVIPWNGFNYEDAILISDRIVKEDLYTSIHIKEFSIEVRETKLGPEKVTGDIPNVSEKILNKLDENGIIRIGTYVKPGDILVGKVTPKSEGDITPEFRLLTSIFGEKAKDVKNNSLKVPHGTEGTVIDVQRITKEDVGNLSPGVEEILKVYVAKKRKLKEGDKMAGRHGNKGVVAKILPVEDMPYLADGTPLDICLNPLGVPSRMNIGQLMESQLGLAGKYLGESYNVPVFESATNEQIQEKLKTAGFNPTSKEILYDGYTGEPFENEVMVGVIYMLKLHHLVDDKMHARSTGPYSLVSQQPLGGKAQFGGQRLGEMEVWALEAYGAAHTLQELLTVKSDDMSGRVKIYENIVKGVPTNVSGIPESFNVLMQELRGLGLDLSIYDDAGNQVPLTEKEEELINKS.

It belongs to the RNA polymerase beta chain family. In terms of assembly, the RNAP catalytic core consists of 2 alpha, 1 beta, 1 beta' and 1 omega subunit. When a sigma factor is associated with the core the holoenzyme is formed, which can initiate transcription.

It carries out the reaction RNA(n) + a ribonucleoside 5'-triphosphate = RNA(n+1) + diphosphate. DNA-dependent RNA polymerase catalyzes the transcription of DNA into RNA using the four ribonucleoside triphosphates as substrates. The sequence is that of DNA-directed RNA polymerase subunit beta from Borreliella burgdorferi (strain ZS7) (Borrelia burgdorferi).